The chain runs to 465 residues: NADH-quinone oxidoreductase subunit N (465 aa).

The next 13 membrane-spanning stretches (helical) occupy residues 6–26 (ILPE…GIVF), 30–50 (TINL…ILSA), 66–86 (LYIR…LLLL), 98–118 (SILI…NNLI), 156–176 (ALSS…TGLV), 194–214 (IVFG…IAPF), 226–246 (PTIV…TFLI), 261–281 (FQPV…FGAL), 289–309 (LLAY…SIFT), 317–337 (LIYL…FIQI), 363–383 (ILLF…KLFI), 391–411 (GFIG…YYYL), and 432–452 (SLFI…MCVE).

Belongs to the complex I subunit 2 family. In terms of assembly, NDH-1 is composed of 14 different subunits. Subunits NuoA, H, J, K, L, M, N constitute the membrane sector of the complex.

It localises to the cell membrane. The catalysed reaction is a quinone + NADH + 5 H(+)(in) = a quinol + NAD(+) + 4 H(+)(out). Functionally, NDH-1 shuttles electrons from NADH, via FMN and iron-sulfur (Fe-S) centers, to quinones in the respiratory chain. The immediate electron acceptor for the enzyme in this species is believed to be ubiquinone. Couples the redox reaction to proton translocation (for every two electrons transferred, four hydrogen ions are translocated across the cytoplasmic membrane), and thus conserves the redox energy in a proton gradient. The polypeptide is NADH-quinone oxidoreductase subunit N (Wolbachia sp. subsp. Brugia malayi (strain TRS)).